The chain runs to 213 residues: Cytochrome c biogenesis ATP-binding export protein CcmA (213 aa).

The 209-residue stretch at 3 to 211 folds into the ABC transporter domain; that stretch reads LTAENLGVRR…QMTGFAGVET (209 aa). 35–42 lines the ATP pocket; the sequence is GRNGSGKS.

Belongs to the ABC transporter superfamily. CcmA exporter (TC 3.A.1.107) family. The complex is composed of two ATP-binding proteins (CcmA) and two transmembrane proteins (CcmB).

The protein resides in the cell inner membrane. The catalysed reaction is heme b(in) + ATP + H2O = heme b(out) + ADP + phosphate + H(+). Its function is as follows. Part of the ABC transporter complex CcmAB involved in the biogenesis of c-type cytochromes; once thought to export heme, this seems not to be the case, but its exact role is uncertain. Responsible for energy coupling to the transport system. The sequence is that of Cytochrome c biogenesis ATP-binding export protein CcmA from Agrobacterium fabrum (strain C58 / ATCC 33970) (Agrobacterium tumefaciens (strain C58)).